The chain runs to 179 residues: MNKLELIKSSIKSIPNHPKEGIIFRDITSLTEVPEAFQATIDLIIERYKSKGITKVIGTESRGFIFGAPVALALNVPFILVRKPGKLPRETIAQSYQLEYGQDTLEMHVSSIQAGDNVLVIDDLLATGGTIEATVKLVERLQGQVKHAAFVISLPDLGGEVRLRELGVEPFTLVEFSGH.

Belongs to the purine/pyrimidine phosphoribosyltransferase family. In terms of assembly, homodimer.

The protein localises to the cytoplasm. It carries out the reaction AMP + diphosphate = 5-phospho-alpha-D-ribose 1-diphosphate + adenine. Its pathway is purine metabolism; AMP biosynthesis via salvage pathway; AMP from adenine: step 1/1. Catalyzes a salvage reaction resulting in the formation of AMP, that is energically less costly than de novo synthesis. This Histophilus somni (strain 129Pt) (Haemophilus somnus) protein is Adenine phosphoribosyltransferase.